The following is a 213-amino-acid chain: ATP-dependent Clp protease proteolytic subunit (213 aa).

The active-site Nucleophile is Ser114. The active site involves His139.

This sequence belongs to the peptidase S14 family. As to quaternary structure, fourteen ClpP subunits assemble into 2 heptameric rings which stack back to back to give a disk-like structure with a central cavity, resembling the structure of eukaryotic proteasomes.

Its subcellular location is the cytoplasm. It carries out the reaction Hydrolysis of proteins to small peptides in the presence of ATP and magnesium. alpha-casein is the usual test substrate. In the absence of ATP, only oligopeptides shorter than five residues are hydrolyzed (such as succinyl-Leu-Tyr-|-NHMec, and Leu-Tyr-Leu-|-Tyr-Trp, in which cleavage of the -Tyr-|-Leu- and -Tyr-|-Trp bonds also occurs).. Its function is as follows. Cleaves peptides in various proteins in a process that requires ATP hydrolysis. Has a chymotrypsin-like activity. Plays a major role in the degradation of misfolded proteins. This is ATP-dependent Clp protease proteolytic subunit from Pseudomonas putida (strain ATCC 47054 / DSM 6125 / CFBP 8728 / NCIMB 11950 / KT2440).